An 89-amino-acid chain; its full sequence is Dynein light chain 2, cytoplasmic (89 aa).

Belongs to the dynein light chain family. As to quaternary structure, homodimer. The cytoplasmic dynein 1 complex consists of two catalytic heavy chains (HCs) and a number of non-catalytic subunits which present intermediate chains (ICs), light intermediate chains (LICs) and light chains (LCs); the composition seems to vary in respect to the IC, LIC and LC composition. The heavy chain homodimer serves as a scaffold for the probable homodimeric assembly of the respective non-catalytic subunits. Dynein ICs and LICs bind directly to the HC dimer and the LCs assemble on the IC dimer. Interacts with DYNC1I1. Interacts with BMF. Component of the myosin V motor complex. Interacts with BCAS1. Interacts with Basson/BSN. Interacts with AMBRA1 (via TQT motifs); tethering AMBRA1 to the cytoskeleton. Interacts with IQUB.

It is found in the cytoplasm. The protein resides in the cytoskeleton. Acts as one of several non-catalytic accessory components of the cytoplasmic dynein 1 complex that are thought to be involved in linking dynein to cargos and to adapter proteins that regulate dynein function. Cytoplasmic dynein 1 acts as a motor for the intracellular retrograde motility of vesicles and organelles along microtubules. May play a role in changing or maintaining the spatial distribution of cytoskeletal structures. The protein is Dynein light chain 2, cytoplasmic (DYNLL2) of Homo sapiens (Human).